Consider the following 262-residue polypeptide: Type III pantothenate kinase (262 aa).

9–16 (DAGNSRIK) provides a ligand contact to ATP. Residues tyrosine 96 and 103–106 (GSDR) contribute to the substrate site. The active-site Proton acceptor is aspartate 105. Threonine 129 provides a ligand contact to ATP. Threonine 189 is a binding site for substrate.

The protein belongs to the type III pantothenate kinase family. In terms of assembly, homodimer. NH4(+) is required as a cofactor. The cofactor is K(+).

The protein localises to the cytoplasm. It carries out the reaction (R)-pantothenate + ATP = (R)-4'-phosphopantothenate + ADP + H(+). The protein operates within cofactor biosynthesis; coenzyme A biosynthesis; CoA from (R)-pantothenate: step 1/5. In terms of biological role, catalyzes the phosphorylation of pantothenate (Pan), the first step in CoA biosynthesis. This chain is Type III pantothenate kinase, found in Burkholderia ambifaria (strain MC40-6).